The sequence spans 741 residues: Phosphoribosylformylglycinamidine synthase subunit PurL (741 aa).

H53 is a catalytic residue. 2 residues coordinate ATP: Y56 and K95. E97 is a binding site for Mg(2+). Residues S98–H101 and R120 each bind substrate. H99 functions as the Proton acceptor in the catalytic mechanism. D121 is a binding site for Mg(2+). Residue Q244 participates in substrate binding. D274 contributes to the Mg(2+) binding site. Residue E318–Q320 coordinates substrate. Residues D501 and G538 each coordinate ATP. Residue N539 coordinates Mg(2+). S541 contacts substrate.

The protein belongs to the FGAMS family. As to quaternary structure, monomer. Part of the FGAM synthase complex composed of 1 PurL, 1 PurQ and 2 PurS subunits.

Its subcellular location is the cytoplasm. The enzyme catalyses N(2)-formyl-N(1)-(5-phospho-beta-D-ribosyl)glycinamide + L-glutamine + ATP + H2O = 2-formamido-N(1)-(5-O-phospho-beta-D-ribosyl)acetamidine + L-glutamate + ADP + phosphate + H(+). Its pathway is purine metabolism; IMP biosynthesis via de novo pathway; 5-amino-1-(5-phospho-D-ribosyl)imidazole from N(2)-formyl-N(1)-(5-phospho-D-ribosyl)glycinamide: step 1/2. Its function is as follows. Part of the phosphoribosylformylglycinamidine synthase complex involved in the purines biosynthetic pathway. Catalyzes the ATP-dependent conversion of formylglycinamide ribonucleotide (FGAR) and glutamine to yield formylglycinamidine ribonucleotide (FGAM) and glutamate. The FGAM synthase complex is composed of three subunits. PurQ produces an ammonia molecule by converting glutamine to glutamate. PurL transfers the ammonia molecule to FGAR to form FGAM in an ATP-dependent manner. PurS interacts with PurQ and PurL and is thought to assist in the transfer of the ammonia molecule from PurQ to PurL. In Latilactobacillus sakei subsp. sakei (strain 23K) (Lactobacillus sakei subsp. sakei), this protein is Phosphoribosylformylglycinamidine synthase subunit PurL.